The following is a 474-amino-acid chain: Alanine/serine racemase (474 aa).

Residues 139-140 (GS) and glutamine 282 contribute to the pyridoxal 5'-phosphate site. Lysine 308 bears the N6-(pyridoxal phosphate)lysine mark. Threonine 336 contacts pyridoxal 5'-phosphate.

It belongs to the class-III pyridoxal-phosphate-dependent aminotransferase family. As to quaternary structure, homohexamer. It depends on pyridoxal 5'-phosphate as a cofactor.

It catalyses the reaction L-alanine = D-alanine. The catalysed reaction is L-serine = D-serine. With respect to regulation, completely inhibited by hydroxylamine hydrochloride. Catalyzes the interconversion of L-alanine and D-alanine, and L-serine and D-serine. Has weak activity with valine and threonine. The sequence is that of Alanine/serine racemase from Pyrococcus horikoshii (strain ATCC 700860 / DSM 12428 / JCM 9974 / NBRC 100139 / OT-3).